Reading from the N-terminus, the 511-residue chain is Inner membrane ABC transporter permease protein YnjC (511 aa).

Residues 1–8 (MATPLRYA) lie on the Cytoplasmic side of the membrane. A helical membrane pass occupies residues 9–29 (LIFLLWAMVAVIYAPLIPAAL). The Periplasmic segment spans residues 30–62 (TLISPALSLTHWQALFADPQLPQALLATLVSTT). Residues 54 to 255 (LLATLVSTTI…MLLLAAYVLL (202 aa)) form the ABC transmembrane type-1 1 domain. The chain crosses the membrane as a helical span at residues 63-83 (IAAVGALLIALLVIVALWPGP). Residues 84–91 (KWQRMCAR) lie on the Cytoplasmic side of the membrane. The helical transmembrane segment at 92–112 (LPWLLAIPHVAFATSALLLFA) threads the bilayer. Over 113–130 (DGGLLYDYFPYFTPPMDR) the chain is Periplasmic. The helical transmembrane segment at 131–151 (FGIGLGLTLAVKESAFLLWIL) threads the bilayer. The Cytoplasmic portion of the chain corresponds to 152 to 189 (AAVLSEKWLLQQVIVLDSLGYSRWQCLNWLLLPSVAPA). The helical transmembrane segment at 190-210 (LAMAMLAIVAWSLSVVDVAII) threads the bilayer. Residues 211–239 (LGPGNPPTLAVISWQWLTQGDIDQQTKGA) lie on the Periplasmic side of the membrane. Residues 240–260 (LASLLLMLLLAAYVLLSYLLW) traverse the membrane as a helical segment. Topologically, residues 261–284 (RSWRRTIPRVDGVRKPATPLLPGN) are cytoplasmic. Residues 285 to 305 (TLAIFLPLTGVLCVVLLAILA) traverse the membrane as a helical segment. Over 306 to 318 (DQSTINSEALINS) the chain is Periplasmic. One can recognise an ABC transmembrane type-1 2 domain in the interval 315–496 (LINSLTMGLV…LLPLIIFALT (182 aa)). Residues 319–339 (LTMGLVATFIALLLLLLWLEW) traverse the membrane as a helical segment. The Cytoplasmic segment spans residues 340–345 (GPQRRQ). Residues 346–366 (LWLWLPILLPALPLVAGQYTL) traverse the membrane as a helical segment. The Periplasmic segment spans residues 367-374 (ALWLKLDG). The helical transmembrane segment at 375–395 (SWTAVVWGHLLWVMPWMLFIL) threads the bilayer. Over 396 to 432 (QPAWQRIDSRLILIAQTLGWSRAKIFFYVKCPLMLRP) the chain is Cytoplasmic. A helical transmembrane segment spans residues 433-453 (VLIAFAVGFAVGIAQYMPTLW). At 454–485 (LGAGRFPTLTTEAVALSSGGSNGILAAQALWQ) the chain is on the periplasmic side. A helical membrane pass occupies residues 486 to 506 (LLLPLIIFALTALVAKWVGYV). Residues 507–511 (RQGLR) lie on the Cytoplasmic side of the membrane.

It belongs to the binding-protein-dependent transport system permease family.

Its subcellular location is the cell inner membrane. Its function is as follows. Probably part of the binding-protein-dependent transport system YnjCD. Probably responsible for the translocation of the substrate across the membrane. The chain is Inner membrane ABC transporter permease protein YnjC (ynjC) from Escherichia coli (strain K12).